The primary structure comprises 342 residues: Pre-mRNA-splicing factor 18 (342 aa).

Methionine 1 carries the N-acetylmethionine modification.

This sequence belongs to the PRP18 family. Heterodimer with PPIH. Interacts with PRPF4 and with the spliceosome. Part of a complex containing U4/U6 snRNPs. Also detected in the cytoplasm. Detected in brain, heart, liver and skeletal muscle.

The protein resides in the nucleus speckle. In terms of biological role, participates in the second step of pre-mRNA splicing. Down-regulates the expression of potassium channel subunits. This chain is Pre-mRNA-splicing factor 18 (Prpf18), found in Rattus norvegicus (Rat).